We begin with the raw amino-acid sequence, 348 residues long: DnaJ homolog subfamily B member 5 (348 aa).

The J domain occupies 4–68 (DYYKILGIPS…KKRSLYDQYG (65 aa)).

This is DnaJ homolog subfamily B member 5 (Dnajb5) from Mus musculus (Mouse).